The chain runs to 450 residues: MASGAPQNSSQMACDGEIPGFLDTLLQDFPAPLSLESPLPWKVPGTVLGQEEVEAELTELAMGFLGSRNAPPAVAAAVTHEAISQLLQTDLSEFKRLPEQEEEEEEEEERVLTTLLDAKGLSRSFFNCLWEVCSQWQKRVPLTAQAPQRKWLVSIHAIRNTRRKMEDRHVSLPAFNHLFGLSDSVHRAYFAVFDGHGGVDAARYASVHVHTNASHQPELLTDPAAALKEAFRHTDQMFLQKAKRERLQSGTTGVCALITGAALHVAWLGDSQVILVQQGQVVKLMEPHKPERQDEKSRIEALGGFVSLMDCWRVNGTLAVSRAIGDVFQKPYVSGEADAASRELTGLEDYLLLACDGFFDVVPHHEIPGLVHGHLLRQKGSGMHVAEELVAVARDRGSHDNITVMVVFLRDPLELLEGGGQGAGGAQADVGSQDLSTGLSELEINTSQRS.

The region spanning 152–409 (LVSIHAIRNT…DNITVMVVFL (258 aa)) is the PPM-type phosphatase domain. Mn(2+) is bound by residues D194, G195, D356, and D400. The disordered stretch occupies residues 420–450 (GQGAGGAQADVGSQDLSTGLSELEINTSQRS). The segment covering 433-450 (QDLSTGLSELEINTSQRS) has biased composition (polar residues). S450 is modified (phosphoserine).

It belongs to the PP2C family. As to quaternary structure, associates with FEM1B. Mg(2+) serves as cofactor. Mn(2+) is required as a cofactor.

The catalysed reaction is O-phospho-L-seryl-[protein] + H2O = L-seryl-[protein] + phosphate. The enzyme catalyses O-phospho-L-threonyl-[protein] + H2O = L-threonyl-[protein] + phosphate. Dephosphorylates and concomitantly deactivates CaM-kinase II activated upon autophosphorylation, and CaM-kinases IV and I activated upon phosphorylation by CaM-kinase kinase. Promotes apoptosis. The protein is Protein phosphatase 1F (Ppm1f) of Rattus norvegicus (Rat).